Here is an 864-residue protein sequence, read N- to C-terminus: MDDGGNDVDSAEDGDPCDASCPLLMSPSKLASNCFNSASARSSRVNVRGCDTSFRWGRPPPSLFAAKSSLARLSSASHASYLETGHIDLKKNEGLLFINNIFPRKLQWVLEGSLRASRPYEEALKRIDRPHLAASDPLRIIRRVFPHELEVEIKEVVPRFREGGAFVKYTRNEGVKDTDIETAVKDHLEKHPIRPWFNPFQQVKVASVLGRPWIEDLYRIPSPRLRVEFLPGSANDLANDPTTESLYSLFRSYGKLRDIERQPSDSKILPRYAYVEFARPKFAVMAKNCMHGFTIAEKEGGGKFGTRLKINYERKIKLSMIKDWILSHPRIVIPAVAALIAAITVTVFDPIRTFFIKMKIKATLHVEENSVLGWIRKQVSKANIIGLGVVASDPRGLTAIWEDRQGDISQLQSWLTENTETFIIIHGPRGSGKRELVLDQALENYKYKVVIDCKQIQDARGDTAKIARAAGQVGYRPVFSWMNSISSFIDLAAQGMIGTKAGFSETLDAQLSNIWQSTATALKGVILDSRKKNDKDAHLTDEEYLEAHPELRPVVVIDNFLHNASEDNVVYEKITEWAAGLTSANIAHVIFLTTDVSFAKPLSKALPNSVFRTISLGDCSLEVGRRFVLNHLADEARTGDKPPRSEEYLEDLDSCIEILGGRVTDLEFMAHRIEAGETPNGAVNRIIEQSTSEILKMFILSTNTEAQWSHEQVWHLIKMLANSKEGSLPYNQVLLSDLFKENGEVALQALEQAELISVSSINGCPETVKPGKPVYRAVFKKLTENKTLSSRLDLEILSRLISKENKSIGKYEEELRLLGSLPKQPRELTSRIQWLLQKVYNSQNKISRYETESAFLQMILRRGH.

The RRM domain occupies 223-315 (PRLRVEFLPG…TRLKINYERK (93 aa)). Residues 331-351 (IVIPAVAALIAAITVTVFDPI) form a helical membrane-spanning segment. Residues 352–864 (RTFFIKMKIK…FLQMILRRGH (513 aa)) lie on the Mitochondrial intermembrane side of the membrane.

Belongs to the YME2 family.

The protein localises to the mitochondrion inner membrane. Plays a role in maintaining the mitochondrial genome and in controlling the mtDNA escape. Involved in the regulation of mtDNA nucleotide structure and number. May have a dispensable role in early maturation of pre-rRNA. The polypeptide is Mitochondrial escape protein 2 (yme2) (Aspergillus oryzae (strain ATCC 42149 / RIB 40) (Yellow koji mold)).